Reading from the N-terminus, the 459-residue chain is Exodeoxyribonuclease 7 large subunit (459 aa).

This sequence belongs to the XseA family. Heterooligomer composed of large and small subunits.

It localises to the cytoplasm. The catalysed reaction is Exonucleolytic cleavage in either 5'- to 3'- or 3'- to 5'-direction to yield nucleoside 5'-phosphates.. Functionally, bidirectionally degrades single-stranded DNA into large acid-insoluble oligonucleotides, which are then degraded further into small acid-soluble oligonucleotides. This chain is Exodeoxyribonuclease 7 large subunit, found in Pseudomonas savastanoi pv. phaseolicola (strain 1448A / Race 6) (Pseudomonas syringae pv. phaseolicola (strain 1448A / Race 6)).